A 322-amino-acid polypeptide reads, in one-letter code: Breast cancer metastasis-suppressor 1-like protein (322 aa).

Positions 1-16 (MPVHSREKKESNHNDM) are enriched in basic and acidic residues. A disordered region spans residues 1–56 (MPVHSREKKESNHNDMEVDYPENEGSSSEEDDSDSSSGSEEGDSSEMDDEDCERRR). Acidic residues predominate over residues 17-51 (EVDYPENEGSSSEEDDSDSSSGSEEGDSSEMDDED). Coiled coils occupy residues 50–99 (EDCE…QAQE) and 147–178 (EKLLLYDTVQSELEEKIRRLEEDRHSIDITSE).

This sequence belongs to the BRMS1 family.

It localises to the nucleus. Its function is as follows. Involved in the histone deacetylase (HDAC1)-dependent transcriptional repression activity. In Xenopus laevis (African clawed frog), this protein is Breast cancer metastasis-suppressor 1-like protein (brms1l).